The chain runs to 498 residues: Nucleobase transporter PlAzg2 (498 aa).

13 helical membrane passes run Leu-88 to Ile-108, Ala-118 to Gly-138, Leu-142 to Met-162, Ala-169 to Val-189, Ala-203 to Ile-223, Phe-236 to Ile-256, Val-259 to Ala-279, Thr-312 to Ile-332, Ile-357 to Ile-377, Ile-388 to Pro-408, Val-412 to Phe-432, Phe-443 to Ile-463, and Val-478 to Met-498.

It belongs to the nucleobase:cation symporter-2 (NCS2) (TC 2.A.40) family. Azg-like subfamily.

Its subcellular location is the cell membrane. Inhibited by the proton gradient disruptor carbonyl cyanide m-chlorophenylhydrazone (CCCP), but not by the sodium gradient disruptor ouabain. Its function is as follows. Transports adenine, guanine, hypoxanthine, xanthine, cytosine and uracil. Transport is probably proton-dependent. This Paenibacillus larvae subsp. larvae (strain NRRL B-3650 / LMG 16245) protein is Nucleobase transporter PlAzg2.